The sequence spans 168 residues: Ribosome maturation factor RimM (168 aa).

A PRC barrel domain is found at 96–168 (EDEYFITDLI…VMIVRLLEGL (73 aa)).

Belongs to the RimM family. In terms of assembly, binds ribosomal protein uS19.

It is found in the cytoplasm. In terms of biological role, an accessory protein needed during the final step in the assembly of 30S ribosomal subunit, possibly for assembly of the head region. Essential for efficient processing of 16S rRNA. May be needed both before and after RbfA during the maturation of 16S rRNA. It has affinity for free ribosomal 30S subunits but not for 70S ribosomes. This is Ribosome maturation factor RimM from Caldanaerobacter subterraneus subsp. tengcongensis (strain DSM 15242 / JCM 11007 / NBRC 100824 / MB4) (Thermoanaerobacter tengcongensis).